Consider the following 342-residue polypeptide: Ferredoxin--NADP reductase (342 aa).

FAD is bound by residues C17, D36, Q44, Y49, I89, F124, D289, and T330.

This sequence belongs to the ferredoxin--NADP reductase type 2 family. In terms of assembly, homodimer. Requires FAD as cofactor.

The enzyme catalyses 2 reduced [2Fe-2S]-[ferredoxin] + NADP(+) + H(+) = 2 oxidized [2Fe-2S]-[ferredoxin] + NADPH. The chain is Ferredoxin--NADP reductase from Rhodopseudomonas palustris (strain BisA53).